We begin with the raw amino-acid sequence, 203 residues long: Glycerol-3-phosphate acyltransferase (203 aa).

5 consecutive transmembrane segments (helical) span residues 13–33, 62–82, 88–108, 118–138, and 159–179; these read TLAC…LILT, LAAA…AIAS, AGIA…WLSF, IGVL…IWLA, and IALY…MTAI.

This sequence belongs to the PlsY family. In terms of assembly, probably interacts with PlsX.

Its subcellular location is the cell inner membrane. It catalyses the reaction an acyl phosphate + sn-glycerol 3-phosphate = a 1-acyl-sn-glycero-3-phosphate + phosphate. The protein operates within lipid metabolism; phospholipid metabolism. Catalyzes the transfer of an acyl group from acyl-phosphate (acyl-PO(4)) to glycerol-3-phosphate (G3P) to form lysophosphatidic acid (LPA). This enzyme utilizes acyl-phosphate as fatty acyl donor, but not acyl-CoA or acyl-ACP. The chain is Glycerol-3-phosphate acyltransferase from Rhizobium meliloti (strain 1021) (Ensifer meliloti).